A 91-amino-acid polypeptide reads, in one-letter code: C-C motif chemokine 5 (91 aa).

Residues M1–A23 form the signal peptide. Cystine bridges form between C33–C57 and C34–C73.

The protein belongs to the intercrine beta (chemokine CC) family.

The protein resides in the secreted. Its function is as follows. Chemoattractant for blood monocytes, memory T-helper cells and eosinophils. Causes the release of histamine from basophils and activates eosinophils. May activate several chemokine receptors including CCR1, CCR3, CCR4 and CCR5. May also be an agonist of the G protein-coupled receptor GPR75. Together with GPR75, may play a role in neuron survival through activation of a downstream signaling pathway involving the PI3, Akt and MAP kinases. By activating GPR75 may also play a role in insulin secretion by islet cells. In Macaca mulatta (Rhesus macaque), this protein is C-C motif chemokine 5 (CCL5).